The sequence spans 202 residues: 7-cyano-7-deazaguanine synthase 1 (202 aa).

Met7–Ala17 provides a ligand contact to ATP. Cys166, Cys174, Cys177, and Cys180 together coordinate Zn(2+).

It belongs to the QueC family. It depends on Zn(2+) as a cofactor.

The enzyme catalyses 7-carboxy-7-deazaguanine + NH4(+) + ATP = 7-cyano-7-deazaguanine + ADP + phosphate + H2O + H(+). It functions in the pathway purine metabolism; 7-cyano-7-deazaguanine biosynthesis. Its function is as follows. Catalyzes the ATP-dependent conversion of 7-carboxy-7-deazaguanine (CDG) to 7-cyano-7-deazaguanine (preQ(0)). The sequence is that of 7-cyano-7-deazaguanine synthase 1 (queC1) from Sulfurisphaera tokodaii (strain DSM 16993 / JCM 10545 / NBRC 100140 / 7) (Sulfolobus tokodaii).